Reading from the N-terminus, the 173-residue chain is Lipoprotein signal peptidase (173 aa).

Transmembrane regions (helical) follow at residues 11–31 (FGLIFAAVAFLLDQVTKWIVT), 69–89 (TTRWTLVAVTGIVAAAVAFWM), and 93–113 (QAKGDVIALALILGGALGNIV). Residues Asp-123 and Asp-142 contribute to the active site. The helical transmembrane segment at 134 to 154 (PFMIFNVADACITIGVLLLVA) threads the bilayer.

This sequence belongs to the peptidase A8 family.

It localises to the cell inner membrane. It catalyses the reaction Release of signal peptides from bacterial membrane prolipoproteins. Hydrolyzes -Xaa-Yaa-Zaa-|-(S,diacylglyceryl)Cys-, in which Xaa is hydrophobic (preferably Leu), and Yaa (Ala or Ser) and Zaa (Gly or Ala) have small, neutral side chains.. The protein operates within protein modification; lipoprotein biosynthesis (signal peptide cleavage). Functionally, this protein specifically catalyzes the removal of signal peptides from prolipoproteins. In Sphingopyxis alaskensis (strain DSM 13593 / LMG 18877 / RB2256) (Sphingomonas alaskensis), this protein is Lipoprotein signal peptidase.